A 161-amino-acid polypeptide reads, in one-letter code: MPICSLQTFADALPPGRPVLGLDLGTRTIGVATSDVRLTLATPIITIKRRKFTLDVQELFALADGRAAAGLVLGLPVEMDGSEGPRCQATRAFARNLLALRDLPVLLWDERLSTAAVNRFLVGEADMTRARRAEVVDRAAAAYILQGALDALDRQRPEQAF.

This sequence belongs to the YqgF nuclease family.

The protein localises to the cytoplasm. Functionally, could be a nuclease involved in processing of the 5'-end of pre-16S rRNA. The protein is Putative pre-16S rRNA nuclease of Rhodospirillum rubrum (strain ATCC 11170 / ATH 1.1.1 / DSM 467 / LMG 4362 / NCIMB 8255 / S1).